A 290-amino-acid chain; its full sequence is Poly-beta-1,6-N-acetyl-D-glucosamine N-deacetylase (290 aa).

Positions Met1 to Ala28 are cleaved as a signal peptide. The NodB homology domain maps to Arg114–Asp290.

Belongs to the polysaccharide deacetylase family.

The protein resides in the secreted. It localises to the cell wall. In terms of biological role, catalyzes the N-deacetylation of poly-beta-1,6-N-acetyl-D-glucosamine (PNAG, also referred to as PIA), a biofilm adhesin polysaccharide. N-deacetylation is crucial for attachment of the polysaccharide to the bacterial cell surface; it leads to the introduction of positive charges in the otherwise neutral PIA polymer, allowing electrostatic interactions. The sequence is that of Poly-beta-1,6-N-acetyl-D-glucosamine N-deacetylase (icaB) from Staphylococcus aureus (strain Mu50 / ATCC 700699).